We begin with the raw amino-acid sequence, 61 residues long: Large ribosomal subunit protein bL32 (61 aa).

Basic residues predominate over residues 1 to 10 (MAQPKKKTSN). The segment at 1–23 (MAQPKKKTSNAKRDQRRATWKRK) is disordered.

The protein belongs to the bacterial ribosomal protein bL32 family.

The protein is Large ribosomal subunit protein bL32 of Gloeobacter violaceus (strain ATCC 29082 / PCC 7421).